A 285-amino-acid chain; its full sequence is SLAM family member 8 (285 aa).

The signal sequence occupies residues 1 to 22; sequence MVMRPLWSLLLWEALLPITVTG. At 23 to 233 the chain is on the extracellular side; sequence AQVLSKVGGS…AAPGKASYKD (211 aa). A glycan (N-linked (GlcNAc...) asparagine) is linked at Asn85. Residues 128 to 215 form the Ig-like C2-type domain; the sequence is PVVQVFIAVE…PVSWDLATVT (88 aa). Cys152 and Cys201 are disulfide-bonded. A helical membrane pass occupies residues 234-254; that stretch reads VLLVVVPVSLLLMLVTLFSAW. Residues 255 to 285 are Cytoplasmic-facing; the sequence is HWCPCSGKKKKDVHADRVGPETENPLVQDLP. Positions 262–285 are disordered; that stretch reads KKKKDVHADRVGPETENPLVQDLP.

As to expression, expressed in lymph node, spleen, thymus and bone marrow.

It is found in the membrane. Functionally, may play a role in B-lineage commitment and/or modulation of signaling through the B-cell receptor. This Homo sapiens (Human) protein is SLAM family member 8 (SLAMF8).